The following is a 192-amino-acid chain: Xanthine phosphoribosyltransferase (192 aa).

Xanthine contacts are provided by Leu-20 and Thr-26. 127-131 (ANGQA) is a 5-phospho-alpha-D-ribose 1-diphosphate binding site. Xanthine is bound at residue Lys-155.

It belongs to the purine/pyrimidine phosphoribosyltransferase family. Xpt subfamily. In terms of assembly, homodimer.

The protein localises to the cytoplasm. The catalysed reaction is XMP + diphosphate = xanthine + 5-phospho-alpha-D-ribose 1-diphosphate. It functions in the pathway purine metabolism; XMP biosynthesis via salvage pathway; XMP from xanthine: step 1/1. Converts the preformed base xanthine, a product of nucleic acid breakdown, to xanthosine 5'-monophosphate (XMP), so it can be reused for RNA or DNA synthesis. The sequence is that of Xanthine phosphoribosyltransferase from Streptococcus thermophilus.